We begin with the raw amino-acid sequence, 268 residues long: Ribosomal RNA small subunit methyltransferase A (268 aa).

Asn-10, Ile-12, Gly-37, Glu-58, Asp-83, and Asn-107 together coordinate S-adenosyl-L-methionine.

This sequence belongs to the class I-like SAM-binding methyltransferase superfamily. rRNA adenine N(6)-methyltransferase family. RsmA subfamily.

Its subcellular location is the cytoplasm. The enzyme catalyses adenosine(1518)/adenosine(1519) in 16S rRNA + 4 S-adenosyl-L-methionine = N(6)-dimethyladenosine(1518)/N(6)-dimethyladenosine(1519) in 16S rRNA + 4 S-adenosyl-L-homocysteine + 4 H(+). Its function is as follows. Specifically dimethylates two adjacent adenosines (A1518 and A1519) in the loop of a conserved hairpin near the 3'-end of 16S rRNA in the 30S particle. May play a critical role in biogenesis of 30S subunits. In Caldanaerobacter subterraneus subsp. tengcongensis (strain DSM 15242 / JCM 11007 / NBRC 100824 / MB4) (Thermoanaerobacter tengcongensis), this protein is Ribosomal RNA small subunit methyltransferase A.